Here is a 722-residue protein sequence, read N- to C-terminus: Polyribonucleotide nucleotidyltransferase (722 aa).

The Mg(2+) site is built by Asp498 and Asp504. The region spanning 565 to 624 (PQFHTMKIDPDKIRDIIGKGGATIRSITEETGASIDIDDNGTIKIYADDGDGMQAAIARI) is the KH domain. The S1 motif domain occupies 634–702 (GAVYQGKVVR…QRGRIKLSIK (69 aa)).

This sequence belongs to the polyribonucleotide nucleotidyltransferase family. Component of the RNA degradosome, which is a multiprotein complex involved in RNA processing and mRNA degradation. Mg(2+) is required as a cofactor.

Its subcellular location is the cytoplasm. The enzyme catalyses RNA(n+1) + phosphate = RNA(n) + a ribonucleoside 5'-diphosphate. Functionally, involved in mRNA degradation. Catalyzes the phosphorolysis of single-stranded polyribonucleotides processively in the 3'- to 5'-direction. This chain is Polyribonucleotide nucleotidyltransferase, found in Saccharophagus degradans (strain 2-40 / ATCC 43961 / DSM 17024).